The following is a 231-amino-acid chain: Endo-1,4-beta-xylanase 4 (231 aa).

The first 18 residues, 1–18 (MVSFTTILVAATAALVAA), serve as a signal peptide directing secretion. The GH11 domain maps to 42-230 (GGTPSSTGTH…SSGSSTVTIQ (189 aa)). Residue asparagine 99 is glycosylated (N-linked (GlcNAc...) asparagine). The active-site Nucleophile is the glutamate 126. Glutamate 217 (proton donor) is an active-site residue.

The protein belongs to the glycosyl hydrolase 11 (cellulase G) family.

Its subcellular location is the secreted. The catalysed reaction is Endohydrolysis of (1-&gt;4)-beta-D-xylosidic linkages in xylans.. Its pathway is glycan degradation; xylan degradation. Its function is as follows. Endo-1,4-beta-xylanase involved in the hydrolysis of xylan, a major structural heterogeneous polysaccharide found in plant biomass representing the second most abundant polysaccharide in the biosphere, after cellulose. This is Endo-1,4-beta-xylanase 4 (XYL4) from Pyricularia grisea (Crabgrass-specific blast fungus).